The following is a 383-amino-acid chain: MTDRNEFLNDINKIVIKIGTSSLTKQNCDSTKENCSIDPTFIENIAAQVSELRKLGKEVIVVSSGAIGVGLYELGIAPKPREIPIRQAAAAVGQSILMQYWSEAFSKHGIKVAQILLTYEFYSDRVSYLNLRNSISTLLEYGVVPIINENDCTCTNEIEAIFGDNDKLSAMVASKIDADLLIILSDIDGLFDKNPKIHEDARLISLVEKITPEIESYGGDPTSFKGVGGMRTKIKAAKICSMAGCYVLIANSEIEDVLLKVLSGKEIGTLFLAERHIQKNRARWIILSRASGTIRVDAGAKAAVLGKNSLLSAGVVDVEGNFDRGDVVRLECEGRVFAKGITDYTSEELMKIKGAHTDEIEGILGYNNYSNVIKKENIGIMEN.

Position 17 (lysine 17) interacts with ATP. The substrate site is built by serine 64, aspartate 151, and asparagine 165. Serine 185–aspartate 186 lines the ATP pocket. One can recognise a PUA domain in the interval serine 291–asparagine 367.

The protein belongs to the glutamate 5-kinase family.

It localises to the cytoplasm. It catalyses the reaction L-glutamate + ATP = L-glutamyl 5-phosphate + ADP. Its pathway is amino-acid biosynthesis; L-proline biosynthesis; L-glutamate 5-semialdehyde from L-glutamate: step 1/2. Catalyzes the transfer of a phosphate group to glutamate to form L-glutamate 5-phosphate. In Methanosarcina barkeri (strain Fusaro / DSM 804), this protein is Glutamate 5-kinase.